A 137-amino-acid polypeptide reads, in one-letter code: Small ribosomal subunit protein uS12 (137 aa).

The disordered stretch occupies residues 1–55 (MPTINQLVRKPRQSKSKKSDSPALNRNFNSKKKKFTDLNSPQKRGVCTRVGTMTP). A 3-methylthioaspartic acid modification is found at Asp102. The disordered stretch occupies residues 118–137 (SGVDGRRQGRSLYGTKKPKK).

The protein belongs to the universal ribosomal protein uS12 family. In terms of assembly, part of the 30S ribosomal subunit. Contacts proteins S8 and S17. May interact with IF1 in the 30S initiation complex.

In terms of biological role, with S4 and S5 plays an important role in translational accuracy. Interacts with and stabilizes bases of the 16S rRNA that are involved in tRNA selection in the A site and with the mRNA backbone. Located at the interface of the 30S and 50S subunits, it traverses the body of the 30S subunit contacting proteins on the other side and probably holding the rRNA structure together. The combined cluster of proteins S8, S12 and S17 appears to hold together the shoulder and platform of the 30S subunit. The polypeptide is Small ribosomal subunit protein uS12 (Staphylococcus saprophyticus subsp. saprophyticus (strain ATCC 15305 / DSM 20229 / NCIMB 8711 / NCTC 7292 / S-41)).